The primary structure comprises 363 residues: Holliday junction branch migration complex subunit RuvB (363 aa).

A disordered region spans residues 1-32 (MAIQTDSFAAAPAPSSGSTRRLISAAPTSPNE). A compositionally biased stretch (low complexity) spans 7–18 (SFAAAPAPSSGS). A large ATPase domain (RuvB-L) region spans residues 13–200 (APSSGSTRRL…FGIVARLEFY (188 aa)). Residues Leu39, Arg40, Gly81, Lys84, Thr85, Thr86, 147-149 (EDY), Arg190, Tyr200, and Arg237 contribute to the ATP site. Thr85 contacts Mg(2+). A small ATPAse domain (RuvB-S) region spans residues 201–271 (TPEELVRIVT…IAELALTMLD (71 aa)). Residues 274-363 (PRGFDVMDRK…GPVGSDLFEG (90 aa)) form a head domain (RuvB-H) region. 2 residues coordinate DNA: Arg329 and Arg334.

It belongs to the RuvB family. In terms of assembly, homohexamer. Forms an RuvA(8)-RuvB(12)-Holliday junction (HJ) complex. HJ DNA is sandwiched between 2 RuvA tetramers; dsDNA enters through RuvA and exits via RuvB. An RuvB hexamer assembles on each DNA strand where it exits the tetramer. Each RuvB hexamer is contacted by two RuvA subunits (via domain III) on 2 adjacent RuvB subunits; this complex drives branch migration. In the full resolvosome a probable DNA-RuvA(4)-RuvB(12)-RuvC(2) complex forms which resolves the HJ.

The protein resides in the cytoplasm. The enzyme catalyses ATP + H2O = ADP + phosphate + H(+). Functionally, the RuvA-RuvB-RuvC complex processes Holliday junction (HJ) DNA during genetic recombination and DNA repair, while the RuvA-RuvB complex plays an important role in the rescue of blocked DNA replication forks via replication fork reversal (RFR). RuvA specifically binds to HJ cruciform DNA, conferring on it an open structure. The RuvB hexamer acts as an ATP-dependent pump, pulling dsDNA into and through the RuvAB complex. RuvB forms 2 homohexamers on either side of HJ DNA bound by 1 or 2 RuvA tetramers; 4 subunits per hexamer contact DNA at a time. Coordinated motions by a converter formed by DNA-disengaged RuvB subunits stimulates ATP hydrolysis and nucleotide exchange. Immobilization of the converter enables RuvB to convert the ATP-contained energy into a lever motion, pulling 2 nucleotides of DNA out of the RuvA tetramer per ATP hydrolyzed, thus driving DNA branch migration. The RuvB motors rotate together with the DNA substrate, which together with the progressing nucleotide cycle form the mechanistic basis for DNA recombination by continuous HJ branch migration. Branch migration allows RuvC to scan DNA until it finds its consensus sequence, where it cleaves and resolves cruciform DNA. This is Holliday junction branch migration complex subunit RuvB from Leptothrix cholodnii (strain ATCC 51168 / LMG 8142 / SP-6) (Leptothrix discophora (strain SP-6)).